Here is a 155-residue protein sequence, read N- to C-terminus: Peptide deformylase (155 aa).

Fe cation is bound by residues C88 and H130. E131 is an active-site residue. H134 contacts Fe cation.

This sequence belongs to the polypeptide deformylase family. It depends on Fe(2+) as a cofactor.

It catalyses the reaction N-terminal N-formyl-L-methionyl-[peptide] + H2O = N-terminal L-methionyl-[peptide] + formate. Functionally, removes the formyl group from the N-terminal Met of newly synthesized proteins. Requires at least a dipeptide for an efficient rate of reaction. N-terminal L-methionine is a prerequisite for activity but the enzyme has broad specificity at other positions. The chain is Peptide deformylase from Pelotomaculum thermopropionicum (strain DSM 13744 / JCM 10971 / SI).